Here is a 985-residue protein sequence, read N- to C-terminus: Cation channel sperm-associated auxiliary subunit epsilon (985 aa).

A signal peptide spans 1-35; sequence MPSAGQRKPGSLLALQALQKWLLRGGVGAMLARQV. Topologically, residues 36 to 937 are extracellular; that stretch reads VAALLLWLSC…ESLGMIPRSS (902 aa). Cystine bridges form between C87–C101, C130–C235, C275–C365, and C439–C442. N-linked (GlcNAc...) asparagine glycans are attached at residues N91, N143, and N292. N-linked (GlcNAc...) asparagine glycans are attached at residues N502, N517, and N565. Disulfide bonds link C617-C724, C737-C919, C753-C786, and C838-C869. A glycan (N-linked (GlcNAc...) asparagine) is linked at N749. The N-linked (GlcNAc...) asparagine glycan is linked to N830. N-linked (GlcNAc...) asparagine glycans are attached at residues N888, N915, and N920. Residues 938–958 traverse the membrane as a helical segment; sequence VYLVAALIFVLMLTFISILVL. Over 959-985 the chain is Cytoplasmic; the sequence is SYFWYLKIYRQFIIEPLHKRPAKQKKN.

This sequence belongs to the CATSPERD family. Component of the CatSper complex or CatSpermasome composed of the core pore-forming members CATSPER1, CATSPER2, CATSPER3 and CATSPER4 as well as auxiliary members CATSPERB, CATSPERG2, CATSPERD, CATSPERE, CATSPERZ, C2CD6/CATSPERT, SLCO6C1, TMEM249, TMEM262 and EFCAB9. HSPA1 may be an additional auxiliary complex member. The core complex members CATSPER1, CATSPER2, CATSPER3 and CATSPER4 form a heterotetrameric channel. The auxiliary CATSPERB, CATSPERG2, CATSPERD and CATSPERE subunits form a pavilion-like structure over the pore which stabilizes the complex through interactions with CATSPER4, CATSPER3, CATSPER1 and CATSPER2 respectively. SLCO6C1 interacts with CATSPERE and TMEM262/CATSPERH interacts with CATSPERB, further stabilizing the complex. C2CD6/CATSPERT interacts at least with CATSPERD and is required for targeting the CatSper complex in the flagellar membrane. In terms of tissue distribution, testis-specific.

The protein localises to the cell projection. The protein resides in the cilium. It localises to the flagellum membrane. Its function is as follows. Auxiliary component of the CatSper complex, a complex involved in sperm cell hyperactivation. Sperm cell hyperactivation is needed for sperm motility which is essential late in the preparation of sperm for fertilization. The sequence is that of Cation channel sperm-associated auxiliary subunit epsilon from Mus musculus (Mouse).